The chain runs to 876 residues: Serrate RNA effector molecule homolog (876 aa).

Positions 1 to 90 are disordered; sequence MGDSDDEYDR…RRDWDEHSSD (90 aa). At glycine 2 the chain carries N-acetylglycine. A Phosphoserine modification is found at serine 4. Tyrosine 8 is modified (phosphotyrosine). Over residues 8–73 the composition is skewed to basic and acidic residues; that stretch reads YDRRRRDKFR…ERFSPPRHEL (66 aa). Residues serine 67, serine 74, and serine 136 each carry the phosphoserine modification. Lysine 150 participates in a covalent cross-link: Glycyl lysine isopeptide (Lys-Gly) (interchain with G-Cter in SUMO2). Residues 271-412 form a disordered region; it reads EEEEEQAGKP…KPKDAAGLEC (142 aa). Residues 297-347 show a composition bias toward basic and acidic residues; that stretch reads DGERKTNDKDEKKEDGKQAENDSSNDDKTKKSEGDGDKEEKKEDSEKEAKK. Residues 370–387 show a composition bias toward acidic residues; that stretch reads SESESESGQAEEEKEEAE. The span at 388-412 shows a compositional bias: basic and acidic residues; the sequence is EALKEKEKPKEEEWEKPKDAAGLEC. 2 positions are modified to phosphoserine: serine 493 and serine 540. Threonine 544 carries the phosphothreonine modification. Phosphoserine is present on serine 570. The tract at residues 575-598 is disordered; sequence ELLGSSGGAPPEEPPKEGNPAEIN. A Phosphothreonine modification is found at threonine 671. Position 679 is a phosphoserine (serine 679). Arginine 833, arginine 840, and arginine 850 each carry omega-N-methylarginine. The interval 835-854 is disordered; that stretch reads NYDAFRGQGGYPGKPRNRMV.

The protein belongs to the ARS2 family. Interacts with NCBP1 and DROSHA. Interacts with CASP8AP2 and ERBB4. Interacts with LUZP4. Interacts with NCBP2/CBP20 and NCBP3. Interacts with MTREX. As to expression, ubiquitously expressed.

It is found in the nucleus. It localises to the nucleoplasm. The protein resides in the cytoplasm. Functionally, acts as a mediator between the cap-binding complex (CBC) and the primary microRNAs (miRNAs) processing machinery during cell proliferation. Contributes to the stability and delivery of capped primary miRNA transcripts to the primary miRNA processing complex containing DGCR8 and DROSHA, thereby playing a role in RNA-mediated gene silencing (RNAi) by miRNAs. Binds capped RNAs (m7GpppG-capped RNA); however interaction is probably mediated via its interaction with NCBP1/CBP80 component of the CBC complex. Involved in cell cycle progression at S phase. Does not directly confer arsenite resistance but rather modulates arsenic sensitivity. Independently of its activity on miRNAs, necessary and sufficient to promote neural stem cell self-renewal. Does so by directly binding SOX2 promoter and positively regulating its transcription. This Homo sapiens (Human) protein is Serrate RNA effector molecule homolog (SRRT).